The primary structure comprises 448 residues: Asparagine--tRNA ligase (448 aa).

This sequence belongs to the class-II aminoacyl-tRNA synthetase family. As to quaternary structure, homodimer.

Its subcellular location is the cytoplasm. It catalyses the reaction tRNA(Asn) + L-asparagine + ATP = L-asparaginyl-tRNA(Asn) + AMP + diphosphate + H(+). The sequence is that of Asparagine--tRNA ligase from Streptococcus pyogenes serotype M4 (strain MGAS10750).